Reading from the N-terminus, the 587-residue chain is Sedolisin (587 aa).

Residues 1 to 32 (MKSSAAKQTVLCLNRYAVVALPLAIASFAAFG) form the signal peptide. Positions 33–215 (ASPASTLWAP…VGERSAAKTL (183 aa)) are cleaved as a propeptide — removed in mature form. The Peptidase S53 domain maps to 219-583 (TAKGHNPTEF…AKLSAYIRSN (365 aa)). Positions 276–295 (TIQTGSSNGDYSDDQQGQGE) are disordered. Active-site charge relay system residues include E295 and D299. A disulfide bridge connects residues C352 and C391. S502 functions as the Charge relay system in the catalytic mechanism. Ca(2+) is bound by residues D543, V544, G559, G561, and D563. A propeptide spans 586–587 (GH) (removed in mature form).

It depends on Ca(2+) as a cofactor. In terms of processing, autocatalytically processed.

The protein resides in the periplasm. The catalysed reaction is Hydrolysis of the B chain of insulin at 13-Glu-|-Ala-14, 15-Leu-|-Tyr-16 and 25-Phe-|-Tyr-26 and angiotensin I at 4-Tyr-|-Ile-5. A good synthetic substrate is Lys-Pro-Ile-Glu-Phe-|-Phe(NO2)-Arg-Leu.. Its activity is regulated as follows. Inhibited by 1,2-epoxy-3-(p-nitrophenoxy)propane (EPNP), but not by carboxyl proteinase inhibitors, such as pepstatin, pepstatin Ac (S-PI) and diazoacetyl-DL-norleucine methyl ester (DAN). Inhibited by tyrostatin, pseudo-tyrostatin, AcIPF, AcIAF, chymostatin and pseudo-iodotyrostatin. Pepstatin-insensitive serine-carboxyl proteinase. In vitro can hydrolyze various synthetic peptides. Also shows activity on acid-denatured hemoglobin and on casein. The chain is Sedolisin (pcp) from Pseudomonas sp. (strain 101) (Achromobacter parvulus T1).